We begin with the raw amino-acid sequence, 500 residues long: Probable malate:quinone oxidoreductase (500 aa).

The protein belongs to the MQO family. FAD serves as cofactor.

It catalyses the reaction (S)-malate + a quinone = a quinol + oxaloacetate. Its pathway is carbohydrate metabolism; tricarboxylic acid cycle; oxaloacetate from (S)-malate (quinone route): step 1/1. This chain is Probable malate:quinone oxidoreductase, found in Bacillus mycoides (strain KBAB4) (Bacillus weihenstephanensis).